The chain runs to 108 residues: MMKPVMLSVYGAENVCASCVNMPTAKDTYEWLEAALKRKYPNQPFEMQYIDIHEPPDNEHAKELAEKIRNDEYFYPLVLVEDKIVGEGNPKLKDVYEEMEKHGYTENR.

A disulfide bridge connects residues C16 and C19.

In Bacillus subtilis (strain 168), this protein is Putative disulfide oxidoreductase YuzD (yuzD).